We begin with the raw amino-acid sequence, 166 residues long: Probable chemoreceptor glutamine deamidase CheD 1 (166 aa).

The protein belongs to the CheD family.

It catalyses the reaction L-glutaminyl-[protein] + H2O = L-glutamyl-[protein] + NH4(+). Its function is as follows. Probably deamidates glutamine residues to glutamate on methyl-accepting chemotaxis receptors (MCPs), playing an important role in chemotaxis. The polypeptide is Probable chemoreceptor glutamine deamidase CheD 1 (Leptospira interrogans serogroup Icterohaemorrhagiae serovar copenhageni (strain Fiocruz L1-130)).